The chain runs to 557 residues: Potassium-transporting ATPase potassium-binding subunit (557 aa).

12 consecutive transmembrane segments (helical) span residues 5–25 (GFLL…PLGS), 63–83 (LCAI…MLLG), 132–152 (GLTV…FALI), 170–190 (LLRI…LFFI), 253–273 (FVQM…FGEV), 283–303 (LLWA…WAEV), 329–349 (VLVS…AVIA), 356–376 (ALGG…FGGV), 379–399 (GLYG…LMIG), 416–436 (LTAL…ALAM), 484–504 (LLAF…MAIA), and 526–546 (LFVG…FIPA).

It belongs to the KdpA family. As to quaternary structure, the system is composed of three essential subunits: KdpA, KdpB and KdpC.

It is found in the cell inner membrane. Part of the high-affinity ATP-driven potassium transport (or Kdp) system, which catalyzes the hydrolysis of ATP coupled with the electrogenic transport of potassium into the cytoplasm. This subunit binds the periplasmic potassium ions and delivers the ions to the membrane domain of KdpB through an intramembrane tunnel. This chain is Potassium-transporting ATPase potassium-binding subunit, found in Escherichia coli (strain K12 / MC4100 / BW2952).